The sequence spans 120 residues: Chaperonin GroEL (120 aa).

23–27 (DGTTT) provides a ligand contact to ATP.

The protein belongs to the chaperonin (HSP60) family. In terms of assembly, forms a cylinder of 14 subunits composed of two heptameric rings stacked back-to-back. Interacts with the co-chaperonin GroES.

It localises to the cytoplasm. It catalyses the reaction ATP + H2O + a folded polypeptide = ADP + phosphate + an unfolded polypeptide.. Together with its co-chaperonin GroES, plays an essential role in assisting protein folding. The GroEL-GroES system forms a nano-cage that allows encapsulation of the non-native substrate proteins and provides a physical environment optimized to promote and accelerate protein folding. The polypeptide is Chaperonin GroEL (Mycolicibacterium fallax (Mycobacterium fallax)).